The chain runs to 313 residues: Cobalamin biosynthesis protein CobD (313 aa).

The next 5 membrane-spanning stretches (helical) occupy residues 52–72 (VAGA…GAAL), 79–99 (CWPV…TSLA), 154–174 (VVPL…YRAI), 204–224 (YVGA…VGGS), and 289–309 (AVVL…MLVY).

Belongs to the CobD/CbiB family.

The protein localises to the cell membrane. Its pathway is cofactor biosynthesis; adenosylcobalamin biosynthesis. Converts cobyric acid to cobinamide by the addition of aminopropanol on the F carboxylic group. The sequence is that of Cobalamin biosynthesis protein CobD from Mycobacterium bovis (strain ATCC BAA-935 / AF2122/97).